Reading from the N-terminus, the 250-residue chain is UPF0758 protein RPB_0700 (250 aa).

The segment at 1–27 (MVDPISNAAPPMPADSSERLDPPGFAE) is disordered. Residues 128–250 (VLSSWSAVID…HASLKGLKLF (123 aa)) enclose the MPN domain. Zn(2+) is bound by residues H199, H201, and D212. Positions 199–212 (HNHPSGDPTPSQAD) match the JAMM motif motif.

This sequence belongs to the UPF0758 family.

In Rhodopseudomonas palustris (strain HaA2), this protein is UPF0758 protein RPB_0700.